Consider the following 271-residue polypeptide: (21S)-21-acetoxyl-apo-melianone synthase SDR (271 aa).

Catalysis depends on Ser-150, which acts as the Proton donor. Residue Tyr-163 is the Proton acceptor of the active site. Lys-167 acts as the Proton donor/acceptor in catalysis.

The protein belongs to the short-chain dehydrogenases/reductases (SDR) family. Mainly expressed in petioles.

It carries out the reaction 21-O-acetyl-isomeliandiol + A = (21S)-21-acetoxyl-apo-melianone + AH2. Its pathway is secondary metabolite biosynthesis; terpenoid biosynthesis. Its function is as follows. Oxidoreductase involved in the biosynthesis of limonoids triterpene natural products such as azadirachtin, an antifeedant widely used as bioinsecticide, and possessing many medicinal applications including anti-tumoral, anti-malarial, anti-rheumatic, antibacterial, anti-inflammatory, anti-pyretic and diuretic effects. Catalyzes the oxidation of 21-O-acetyl-isomeliandiol to (21S)-21-acetoxyl-apo-melianone. The protein is (21S)-21-acetoxyl-apo-melianone synthase SDR of Melia azedarach (Chinaberry tree).